Here is a 349-residue protein sequence, read N- to C-terminus: 1-acylglycerol-3-phosphate O-acyltransferase ABHD5 (349 aa).

N-acetylalanine is present on Ala2. In terms of domain architecture, AB hydrolase-1 spans 77-185 (PLVLLHGFGG…VEPWGFPERP (109 aa)). The short motif at 327–332 (HYVYAD) is the HXXXXD motif element.

Belongs to the peptidase S33 family. ABHD4/ABHD5 subfamily. In terms of assembly, interacts with ADRP, PLIN and PNPLA2. Interacts with PLIN5; promotes interaction with PNPLA2.

It localises to the cytoplasm. The protein resides in the lipid droplet. It carries out the reaction a 1-acyl-sn-glycero-3-phosphate + an acyl-CoA = a 1,2-diacyl-sn-glycero-3-phosphate + CoA. The enzyme catalyses 1-(9Z-octadecenoyl)-sn-glycero-3-phosphate + (9Z)-octadecenoyl-CoA = 1,2-di-(9Z-octadecenoyl)-sn-glycero-3-phosphate + CoA. The catalysed reaction is 1-(9Z-octadecenoyl)-sn-glycero-3-phosphate + hexadecanoyl-CoA = 1-(9Z)-octadecenoyl-2-hexadecanoyl-sn-glycero-3-phosphate + CoA. It catalyses the reaction 1-(9Z-octadecenoyl)-sn-glycero-3-phosphate + octadecanoyl-CoA = 1-(9Z-octadecenoyl)-2-octadecanoyl-sn-glycero-3-phosphate + CoA. It carries out the reaction 1-(9Z-octadecenoyl)-sn-glycero-3-phosphate + (5Z,8Z,11Z,14Z)-eicosatetraenoyl-CoA = 1-(9Z)-octadecenoyl-2-(5Z,8Z,11Z,14Z)-eicosatetraenoyl-sn-glycero-3-phosphate + CoA. The enzyme catalyses eicosanoyl-CoA + 1-(9Z-octadecenoyl)-sn-glycero-3-phosphate = 1-(9Z)-octadecenoyl-2-eicosanoyl-sn-glycero-3-phosphate + CoA. The catalysed reaction is 1-hexadecanoyl-sn-glycero-3-phosphate + (9Z)-octadecenoyl-CoA = 1-hexadecanoyl-2-(9Z-octadecenoyl)-sn-glycero-3-phosphate + CoA. It catalyses the reaction 1-octadecanoyl-sn-glycero-3-phosphate + (9Z)-octadecenoyl-CoA = 1-octadecanoyl-2-(9Z-octadecenoyl)-sn-glycero-3-phosphate + CoA. It carries out the reaction 1-(5Z,8Z,11Z,14Z-eicosatetraenoyl)-sn-glycero-3-phosphate + (9Z)-octadecenoyl-CoA = 1-(5Z,8Z,11Z,14Z)-eicosatetraenoyl-2-(9Z)-octadecenoyl-sn-glycero-3-phosphate + CoA. With respect to regulation, acyltransferase activity is inhibited by detergents such as Triton X-100 and 3-[(3-cholamidopropyl)dimethylammonio]-1-propanesulfonate (CHAPS). Acyltransferase activity is inhibited by the presence of magnesium and calcium. In terms of biological role, coenzyme A-dependent lysophosphatidic acid acyltransferase that catalyzes the transfer of an acyl group on a lysophosphatidic acid. Functions preferentially with 1-oleoyl-lysophosphatidic acid followed by 1-palmitoyl-lysophosphatidic acid, 1-stearoyl-lysophosphatidic acid and 1-arachidonoyl-lysophosphatidic acid as lipid acceptor. Functions preferentially with arachidonoyl-CoA followed by oleoyl-CoA as acyl group donors. Functions in phosphatidic acid biosynthesis. May regulate the cellular storage of triacylglycerol through activation of the phospholipase PNPLA2. Involved in keratinocyte differentiation. Regulates lipid droplet fusion. This is 1-acylglycerol-3-phosphate O-acyltransferase ABHD5 from Sus scrofa (Pig).